Here is a 493-residue protein sequence, read N- to C-terminus: Cobyric acid synthase (493 aa).

Residues 260–427 (RLSVAAIRLP…RHGYLQDDPA (168 aa)) form the GATase cobBQ-type domain. Histidine 419 is an active-site residue.

This sequence belongs to the CobB/CobQ family. CobQ subfamily.

The protein operates within cofactor biosynthesis; adenosylcobalamin biosynthesis. Catalyzes amidations at positions B, D, E, and G on adenosylcobyrinic A,C-diamide. NH(2) groups are provided by glutamine, and one molecule of ATP is hydrogenolyzed for each amidation. The chain is Cobyric acid synthase from Corynebacterium efficiens (strain DSM 44549 / YS-314 / AJ 12310 / JCM 11189 / NBRC 100395).